Reading from the N-terminus, the 367-residue chain is UDP-N-acetylglucosamine--N-acetylmuramyl-(pentapeptide) pyrophosphoryl-undecaprenol N-acetylglucosamine transferase (367 aa).

Residues Thr-22 to Gly-24, Asn-134, Arg-170, Ser-198, Ile-253, and Gln-298 contribute to the UDP-N-acetyl-alpha-D-glucosamine site.

The protein belongs to the glycosyltransferase 28 family. MurG subfamily.

The protein resides in the cell inner membrane. It catalyses the reaction di-trans,octa-cis-undecaprenyl diphospho-N-acetyl-alpha-D-muramoyl-L-alanyl-D-glutamyl-meso-2,6-diaminopimeloyl-D-alanyl-D-alanine + UDP-N-acetyl-alpha-D-glucosamine = di-trans,octa-cis-undecaprenyl diphospho-[N-acetyl-alpha-D-glucosaminyl-(1-&gt;4)]-N-acetyl-alpha-D-muramoyl-L-alanyl-D-glutamyl-meso-2,6-diaminopimeloyl-D-alanyl-D-alanine + UDP + H(+). It participates in cell wall biogenesis; peptidoglycan biosynthesis. Its function is as follows. Cell wall formation. Catalyzes the transfer of a GlcNAc subunit on undecaprenyl-pyrophosphoryl-MurNAc-pentapeptide (lipid intermediate I) to form undecaprenyl-pyrophosphoryl-MurNAc-(pentapeptide)GlcNAc (lipid intermediate II). The sequence is that of UDP-N-acetylglucosamine--N-acetylmuramyl-(pentapeptide) pyrophosphoryl-undecaprenol N-acetylglucosamine transferase from Xylella fastidiosa (strain M23).